A 526-amino-acid polypeptide reads, in one-letter code: NAD(P)H-quinone oxidoreductase chain 4 2 (526 aa).

14 helical membrane passes run 6–26 (FPWL…LPLI), 36–56 (WYAL…FYTG), 91–111 (LILL…PVSF), 113–133 (PKLF…VFAV), 137–157 (LLFF…LSIW), 169–189 (FILY…TMAF), 212–232 (LLLY…FPLH), 243–263 (TAPA…YALL), 275–295 (ALFG…AALT), 306–326 (IAYS…SFTD), 332–352 (AMLQ…MVGA), 375–397 (IFAM…GFVA), 417–437 (VIIV…LLSM), and 464–484 (VFVI…PKAV).

It belongs to the complex I subunit 4 family.

It localises to the cellular thylakoid membrane. The enzyme catalyses a plastoquinone + NADH + (n+1) H(+)(in) = a plastoquinol + NAD(+) + n H(+)(out). It carries out the reaction a plastoquinone + NADPH + (n+1) H(+)(in) = a plastoquinol + NADP(+) + n H(+)(out). In terms of biological role, NDH-1 shuttles electrons from NAD(P)H, via FMN and iron-sulfur (Fe-S) centers, to quinones in the respiratory chain. The immediate electron acceptor for the enzyme in this species is believed to be plastoquinone. Couples the redox reaction to proton translocation (for every two electrons transferred, four hydrogen ions are translocated across the cytoplasmic membrane), and thus conserves the redox energy in a proton gradient. This Picosynechococcus sp. (strain ATCC 27264 / PCC 7002 / PR-6) (Agmenellum quadruplicatum) protein is NAD(P)H-quinone oxidoreductase chain 4 2.